A 102-amino-acid chain; its full sequence is Small ribosomal subunit protein uS10 (102 aa).

This sequence belongs to the universal ribosomal protein uS10 family. As to quaternary structure, part of the 30S ribosomal subunit.

Involved in the binding of tRNA to the ribosomes. This chain is Small ribosomal subunit protein uS10, found in Methanococcus maripaludis (strain C6 / ATCC BAA-1332).